The chain runs to 85 residues: Large ribosomal subunit protein bL27 (85 aa).

Residues 1–10 show a composition bias toward gly residues; that stretch reads MAQKKGGGST. Residues 1–20 are disordered; that stretch reads MAQKKGGGSTRNGRDSKPKM.

This sequence belongs to the bacterial ribosomal protein bL27 family.

In Delftia acidovorans (strain DSM 14801 / SPH-1), this protein is Large ribosomal subunit protein bL27.